The primary structure comprises 116 residues: Large ribosomal subunit protein bL17 (116 aa).

Belongs to the bacterial ribosomal protein bL17 family. In terms of assembly, part of the 50S ribosomal subunit. Contacts protein L32.

The sequence is that of Large ribosomal subunit protein bL17 from Prochlorococcus marinus (strain SARG / CCMP1375 / SS120).